The chain runs to 679 residues: Membrane-spanning 4-domains subfamily A member 14 (679 aa).

The next 4 membrane-spanning stretches (helical) occupy residues I50–F70, L76–L96, V110–L130, and M141–L161. Disordered stretches follow at residues V218–P259, S331–Q363, K469–Q491, and V505–V633. Residues K224 to K234 show a composition bias toward basic and acidic residues. The segment covering S337–S348 has biased composition (low complexity). Residues K469–H478 are compositionally biased toward basic and acidic residues. 2 stretches are compositionally biased toward polar residues: residues D519 to Q535 and K550 to D563. Basic and acidic residues predominate over residues Q580–T601. Residues G619–Q632 are compositionally biased toward polar residues.

This sequence belongs to the MS4A family.

Its subcellular location is the membrane. Its function is as follows. May be involved in signal transduction as a component of a multimeric receptor complex. The chain is Membrane-spanning 4-domains subfamily A member 14 (MS4A14) from Homo sapiens (Human).